A 766-amino-acid chain; its full sequence is Ent-copalyl diphosphate synthase 3 (766 aa).

The transit peptide at 1–30 (FRSTAAGRCLPVTCCVFPRHFRVSSSSILP) directs the protein to the chloroplast. Residue lysine 222 participates in substrate binding. Mg(2+) is bound by residues aspartate 354 and aspartate 356. The DXDD motif motif lies at 354 to 357 (DVDD). Residue lysine 440 participates in substrate binding.

The protein belongs to the terpene synthase family. Tpsc subfamily. Mg(2+) is required as a cofactor. As to expression, accumulates in leaves, and, at low levels, in germinating seeds.

The protein localises to the plastid. It is found in the chloroplast. It catalyses the reaction (2E,6E,10E)-geranylgeranyl diphosphate = ent-copalyl diphosphate. Its pathway is plant hormone biosynthesis; gibberellin biosynthesis. The protein operates within secondary metabolite biosynthesis; terpenoid biosynthesis. Its function is as follows. Involved in the biosynthesis of ent-kaurene diterpenoids natural products such as oridonin, miltiradiene, eriocalyxin B and nezukol, known to exhibit antitumor, anti-inflammatory and antibacterial activities, and in the production of gibberellins phytohormones. Catalyzes the conversion of (2E,6E,10E)-geranylgeranyl diphosphate (GGPP) to ent-copalyl diphosphate (ent-CPP). This chain is Ent-copalyl diphosphate synthase 3, found in Isodon eriocalyx (Plectranthus eriocalyx).